A 314-amino-acid polypeptide reads, in one-letter code: Putative thiamine biosynthesis protein HI_0357 (314 aa).

The protein belongs to the NMT1/THI5 family.

Functionally, probably involved in thiamine biosynthesis. The polypeptide is Putative thiamine biosynthesis protein HI_0357 (Haemophilus influenzae (strain ATCC 51907 / DSM 11121 / KW20 / Rd)).